The sequence spans 315 residues: tRNA dimethylallyltransferase (315 aa).

15-22 (GPTACGKS) is an ATP binding site. 17-22 (TACGKS) is a binding site for substrate. 2 interaction with substrate tRNA regions span residues 40-43 (DSAL) and 162-166 (QRLIR).

It belongs to the IPP transferase family. Monomer. The cofactor is Mg(2+).

The enzyme catalyses adenosine(37) in tRNA + dimethylallyl diphosphate = N(6)-dimethylallyladenosine(37) in tRNA + diphosphate. In terms of biological role, catalyzes the transfer of a dimethylallyl group onto the adenine at position 37 in tRNAs that read codons beginning with uridine, leading to the formation of N6-(dimethylallyl)adenosine (i(6)A). The polypeptide is tRNA dimethylallyltransferase (Buchnera aphidicola subsp. Acyrthosiphon pisum (strain APS) (Acyrthosiphon pisum symbiotic bacterium)).